A 1108-amino-acid polypeptide reads, in one-letter code: AP-3 complex subunit beta (1108 aa).

4 HEAT repeats span residues 90-127 (DSALLSINTIQKSLNDQSQVIRASALRVMSSIRVIDII), 327-363 (IEAQKVGKSLVRILRSGPEVQYITLTNISTMVTLRPS), 397-433 (ENIGKILKEFKEYVKNEDKKFVAATIQAIGSCASTVP), and 434-471 (DVTESCIYGLMSLLSNQSTVVVAESVIVLKRLLQLNAT). Positions 480–490 (KEKEKEKDVKE) are enriched in basic and acidic residues. Disordered regions lie at residues 480–501 (KEKEKEKDVKENQSTISKHSSS), 736–797 (DEEE…YDGE), and 811–835 (LFGITNDDNNQTANGIGGGGSGEEE). Acidic residues-rich tracts occupy residues 736–764 (DEEEEDEEEYDEEEEEEEYEEQNEYEDFF) and 780–797 (YDEDEYNQDIDDGEYDGE).

This sequence belongs to the adaptor complexes large subunit family. Adaptor protein complex 3 (AP-3) is a heterotetramer composed of two large adaptins (delta-type subunit and beta-type subunit), a medium adaptin (mu-type subunit) and a small adaptin (sigma-type subunit).

It is found in the endosome membrane. Functionally, part of the AP-3 complex, an adaptor-related complex which is essential for the compartmentalization of the endocytic pathway. This is AP-3 complex subunit beta (ap3b-1) from Dictyostelium discoideum (Social amoeba).